Consider the following 207-residue polypeptide: Octanoyltransferase (207 aa).

Residues 29 to 204 (DDTADELWLV…ELMVQLGDEE (176 aa)) enclose the BPL/LPL catalytic domain. Residues 68 to 75 (RGGQVTYH), 135 to 137 (SLG), and 148 to 150 (GVA) each bind substrate. Cys-166 acts as the Acyl-thioester intermediate in catalysis.

Belongs to the LipB family.

The protein resides in the cytoplasm. The enzyme catalyses octanoyl-[ACP] + L-lysyl-[protein] = N(6)-octanoyl-L-lysyl-[protein] + holo-[ACP] + H(+). It functions in the pathway protein modification; protein lipoylation via endogenous pathway; protein N(6)-(lipoyl)lysine from octanoyl-[acyl-carrier-protein]: step 1/2. Catalyzes the transfer of endogenously produced octanoic acid from octanoyl-acyl-carrier-protein onto the lipoyl domains of lipoate-dependent enzymes. Lipoyl-ACP can also act as a substrate although octanoyl-ACP is likely to be the physiological substrate. The protein is Octanoyltransferase of Methylococcus capsulatus (strain ATCC 33009 / NCIMB 11132 / Bath).